The chain runs to 155 residues: Small ribosomal subunit protein bS6 (155 aa).

The tract at residues glutamate 94 to glutamate 155 is disordered. Positions arginine 107–asparagine 149 are enriched in basic and acidic residues.

It belongs to the bacterial ribosomal protein bS6 family.

Binds together with bS18 to 16S ribosomal RNA. In Parvibaculum lavamentivorans (strain DS-1 / DSM 13023 / NCIMB 13966), this protein is Small ribosomal subunit protein bS6.